Reading from the N-terminus, the 119-residue chain is Large ribosomal subunit protein bL20c (119 aa).

This sequence belongs to the bacterial ribosomal protein bL20 family.

The protein localises to the plastid. Its subcellular location is the chloroplast. Its function is as follows. Binds directly to 23S ribosomal RNA and is necessary for the in vitro assembly process of the 50S ribosomal subunit. It is not involved in the protein synthesizing functions of that subunit. The chain is Large ribosomal subunit protein bL20c from Lolium perenne (Perennial ryegrass).